The sequence spans 602 residues: Elongation factor 4 (602 aa).

A tr-type G domain is found at 7–189 (SRIRNFSIIA…SIVQQVPPPA (183 aa)). Residues 19-24 (DHGKST) and 136-139 (NKID) each bind GTP.

The protein belongs to the TRAFAC class translation factor GTPase superfamily. Classic translation factor GTPase family. LepA subfamily.

The protein localises to the cell inner membrane. It catalyses the reaction GTP + H2O = GDP + phosphate + H(+). In terms of biological role, required for accurate and efficient protein synthesis under certain stress conditions. May act as a fidelity factor of the translation reaction, by catalyzing a one-codon backward translocation of tRNAs on improperly translocated ribosomes. Back-translocation proceeds from a post-translocation (POST) complex to a pre-translocation (PRE) complex, thus giving elongation factor G a second chance to translocate the tRNAs correctly. Binds to ribosomes in a GTP-dependent manner. This chain is Elongation factor 4, found in Picosynechococcus sp. (strain ATCC 27264 / PCC 7002 / PR-6) (Agmenellum quadruplicatum).